Reading from the N-terminus, the 174-residue chain is Large ribosomal subunit protein uL18 (174 aa).

It belongs to the universal ribosomal protein uL18 family. In terms of assembly, part of the 50S ribosomal subunit. Contacts the 5S and 23S rRNAs.

Functionally, this is one of the proteins that bind and probably mediate the attachment of the 5S RNA into the large ribosomal subunit, where it forms part of the central protuberance. This Methanosarcina mazei (strain ATCC BAA-159 / DSM 3647 / Goe1 / Go1 / JCM 11833 / OCM 88) (Methanosarcina frisia) protein is Large ribosomal subunit protein uL18.